Consider the following 320-residue polypeptide: Zinc finger protein 330 (320 aa).

The interval methionine 1–arginine 23 is disordered. The short motif at lysine 3–lysine 11 is the Nuclear localization signal element. Residues lysine 10–leucine 22 are compositionally biased toward basic and acidic residues. 4 consecutive C4-type zinc fingers follow at residues cysteine 42–cysteine 58, cysteine 67–cysteine 104, cysteine 129–cysteine 149, and cysteine 175–cysteine 189. The tract at residues glutamate 206–asparagine 320 is disordered. Residues cysteine 216 to aspartate 225 show a composition bias toward basic and acidic residues. Residues aspartate 269–aspartate 285 are compositionally biased toward acidic residues. At serine 291 the chain carries Phosphoserine.

Belongs to the NOA36 family. As to expression, widely expressed. Higher expression seen in heart and skeletal muscle.

Its subcellular location is the nucleus. It localises to the nucleolus. The protein localises to the chromosome. The protein resides in the centromere. This is Zinc finger protein 330 (ZNF330) from Homo sapiens (Human).